The primary structure comprises 83 residues: EMBRYO SURROUNDING FACTOR 1.1 (83 aa).

The N-terminal stretch at 1–22 is a signal peptide; the sequence is MKSSHTSLICILMLSLVALHQC. Cystine bridges form between Cys41–Cys56, Cys46–Cys75, Cys54–Cys71, and Cys57–Cys64.

The protein belongs to the MEG family. As to expression, expressed exclusively in ovule embryo sacs and in early developing endosperms.

Functionally, maternally-contributed central cell peptide regulating suspensor development and correct auxin distribution in early developing embryos. In Arabidopsis thaliana (Mouse-ear cress), this protein is EMBRYO SURROUNDING FACTOR 1.1 (ESF1.1).